The sequence spans 292 residues: MLKGATLIAGPTASGKSALALQMARERDGVIVNADSMQVYSVLHLLTARPGPEELAMAPHRLYGHVPPSKPYSTGRWISDVRELIEAEALARRAVIFVGGTGLYFRALTEGLSPMPEIPEAVRIRWRKRLAEEGGEALHRLLGEADPLAASRIRPSDSQRIVRALEVVEASGRPISYWQGQASHPLVDMTSCRKIVLMPDRNTLASRIEKRFDQMLRHGAVEEVKQLLALDLPPSMPAMKAIGVREISAVLAGEISLDEAGSRAIAATRQYAKRQITWFRHQLGPDWEHMPV.

An ATP-binding site is contributed by glycine 10–serine 17. Threonine 12 to serine 17 is a substrate binding site. Interaction with substrate tRNA regions lie at residues aspartate 35–glutamine 38 and glutamine 159–arginine 163.

The protein belongs to the IPP transferase family. In terms of assembly, monomer. The cofactor is Mg(2+).

The enzyme catalyses adenosine(37) in tRNA + dimethylallyl diphosphate = N(6)-dimethylallyladenosine(37) in tRNA + diphosphate. Its function is as follows. Catalyzes the transfer of a dimethylallyl group onto the adenine at position 37 in tRNAs that read codons beginning with uridine, leading to the formation of N6-(dimethylallyl)adenosine (i(6)A). This Chelativorans sp. (strain BNC1) protein is tRNA dimethylallyltransferase.